The primary structure comprises 233 residues: MDAYEIIQYIGDAKKQTLVKVTLKGQLKEVTFPETIKVFNNCKTGTLFGDWADVKPFLEANKEKIEDYVVENDARNSAIPFLDLKDINARIEPGALIREKVEIGDQAVIMMGAILNIGAVVGAGTMIDMGAVLGGRATVGKHCHIGAGTVLAGVIEPPSAAPVVIENEVVIGANAVVLEGVRVGEGAVVAAGAVVVEDVPAHTVVAGVPAKVIKQIDDKTKSKTEILEELRKL.

Belongs to the transferase hexapeptide repeat family. DapH subfamily.

It catalyses the reaction (S)-2,3,4,5-tetrahydrodipicolinate + acetyl-CoA + H2O = L-2-acetamido-6-oxoheptanedioate + CoA. Its pathway is amino-acid biosynthesis; L-lysine biosynthesis via DAP pathway; LL-2,6-diaminopimelate from (S)-tetrahydrodipicolinate (acetylase route): step 1/3. In terms of biological role, catalyzes the transfer of an acetyl group from acetyl-CoA to tetrahydrodipicolinate. This Enterococcus faecalis (strain ATCC 700802 / V583) protein is 2,3,4,5-tetrahydropyridine-2,6-dicarboxylate N-acetyltransferase.